The chain runs to 349 residues: Estrogen receptor (349 aa).

Positions 1–5 (YEVGM) form a DNA-binding region, nuclear receptor. The tract at residues 1–38 (YEVGMMKGGIRKDRRGGRMLKHKRQREENDSRNAGALT) is disordered. Residues 12–24 (KDRRGGRMLKHKR) show a composition bias toward basic residues. The 237-residue stretch at 65–301 (TADQMVSALL…DLLLEMLDAH (237 aa)) folds into the NR LBD domain. A disordered region spans residues 306–327 (PAAKGSPPSEDDPLNQLAVPSP).

This sequence belongs to the nuclear hormone receptor family. NR3 subfamily. As to quaternary structure, binds DNA as a homodimer. Can form a heterodimer with ER-beta.

The protein resides in the nucleus. Its function is as follows. The steroid hormones and their receptors are involved in the regulation of eukaryotic gene expression and affect cellular proliferation and differentiation in target tissues. In Anolis carolinensis (Green anole), this protein is Estrogen receptor (ESR1).